A 275-amino-acid polypeptide reads, in one-letter code: MSLILAVYGKGGIGKSTTTANISAALALQGAKVLQIGCDPKHDSTFPLTGTLQKTVIEALDEVDFHHEELEKEDIIETGFAGIDALEAGGPPAGSGCGGYVVGEAVKLLQELGLYDQYDVILFDVLGDVVCGGFSAPLNYADYAVIIATNDFDSIFAANRLCMAIQQKSVRYKVKLAGIVANRVDYVKGGGTNMLEQFSEKVGTKLLARVPYHELIRKSRFAGKTMFQMEDGPEKDECLKPYNEIAEFLLSENPSASVPVPIGDRDIFEIVGGWQ.

ATP is bound by residues 12–17 (GIGKST) and K41. S16 provides a ligand contact to Mg(2+). [4Fe-4S] cluster contacts are provided by C97 and C131. 182–183 (NR) is an ATP binding site.

It belongs to the NifH/BchL/ChlL family. As to quaternary structure, homodimer. Protochlorophyllide reductase is composed of three subunits; BchL, BchN and BchB. [4Fe-4S] cluster serves as cofactor.

The catalysed reaction is chlorophyllide a + oxidized 2[4Fe-4S]-[ferredoxin] + 2 ADP + 2 phosphate = protochlorophyllide a + reduced 2[4Fe-4S]-[ferredoxin] + 2 ATP + 2 H2O. Its pathway is porphyrin-containing compound metabolism; bacteriochlorophyll biosynthesis (light-independent). In terms of biological role, component of the dark-operative protochlorophyllide reductase (DPOR) that uses Mg-ATP and reduced ferredoxin to reduce ring D of protochlorophyllide (Pchlide) to form chlorophyllide a (Chlide). This reaction is light-independent. The L component serves as a unique electron donor to the NB-component of the complex, and binds Mg-ATP. In Prosthecochloris aestuarii (strain DSM 271 / SK 413), this protein is Light-independent protochlorophyllide reductase iron-sulfur ATP-binding protein.